The chain runs to 261 residues: Probable 6-phosphogluconolactonase 4 (261 aa).

This sequence belongs to the glucosamine/galactosamine-6-phosphate isomerase family. 6-phosphogluconolactonase subfamily.

Its subcellular location is the cytoplasm. It localises to the cytosol. The enzyme catalyses 6-phospho-D-glucono-1,5-lactone + H2O = 6-phospho-D-gluconate + H(+). It participates in carbohydrate degradation; pentose phosphate pathway; D-ribulose 5-phosphate from D-glucose 6-phosphate (oxidative stage): step 2/3. Its function is as follows. Catalyzes the hydrolysis of 6-phosphogluconolactone to 6-phosphogluconate. This chain is Probable 6-phosphogluconolactonase 4, found in Arabidopsis thaliana (Mouse-ear cress).